The primary structure comprises 282 residues: Elongation factor Ts (282 aa).

The involved in Mg(2+) ion dislocation from EF-Tu stretch occupies residues 80 to 83; that stretch reads TDFV.

This sequence belongs to the EF-Ts family.

Its subcellular location is the cytoplasm. Functionally, associates with the EF-Tu.GDP complex and induces the exchange of GDP to GTP. It remains bound to the aminoacyl-tRNA.EF-Tu.GTP complex up to the GTP hydrolysis stage on the ribosome. This is Elongation factor Ts from Protochlamydia amoebophila (strain UWE25).